We begin with the raw amino-acid sequence, 631 residues long: Nucleoside triphosphatase I (631 aa).

The Helicase ATP-binding domain occupies 42 to 204; the sequence is FLGLDSMHSL…TMLVNLLRPG (163 aa). 55-62 lines the ATP pocket; it reads HETGVGKT. The DEXH box motif lies at 141–144; it reads DECH. The region spanning 367–532 is the Helicase C-terminal domain; it reads KFIDVCLGIL…EFVQLFRVFK (166 aa). The interval 457-524 is binding to the cap-specific mRNA (nucleoside-2'-O-)-methyltransferase; it reads DIFILDMTWN…EIIQSKSKEF (68 aa).

This sequence belongs to the helicase family. NPH I subfamily. In terms of assembly, monomer. Interacts (via C-terminus) with RAP94/OPG109 (via N-terminus). Interacts with the cap-specific mRNA (nucleoside-2'-O-)-methyltransferase OPG102.

The protein localises to the virion. The enzyme catalyses a ribonucleoside 5'-triphosphate + H2O = a ribonucleoside 5'-diphosphate + phosphate + H(+). In terms of biological role, DNA-dependent ATPase that acts as a 5' to 3' translocase on single-stranded DNA and thereby plays a role in transcription termination of viral early genes. Uses forward translocation in concert with the viral RNA polymerase RAP94/OPG109 subunit and the capping enzyme/VTF to catalyze release of UUUUUNU-containing nascent RNA from the elongation complex. In addition, acts as a positive elongation factor to assist transcription through problematic sequences. In Bos taurus (Bovine), this protein is Nucleoside triphosphatase I (OPG123).